The chain runs to 226 residues: Large ribosomal subunit protein uL1 (226 aa).

This sequence belongs to the universal ribosomal protein uL1 family. In terms of assembly, part of the 50S ribosomal subunit.

Binds directly to 23S rRNA. The L1 stalk is quite mobile in the ribosome, and is involved in E site tRNA release. Its function is as follows. Protein L1 is also a translational repressor protein, it controls the translation of the L11 operon by binding to its mRNA. This is Large ribosomal subunit protein uL1 from Selenomonas ruminantium.